A 1050-amino-acid polypeptide reads, in one-letter code: DNA polymerase I A, chloroplastic/mitochondrial (1050 aa).

Residues 1–91 constitute a chloroplast and mitochondrion transit peptide; the sequence is MAMGVSLTSH…VVFNGEWELR (91 aa). The tract at residues 202 to 240 is disordered; it reads PRKGLDVGDNMDVNPKGEGIQRPLISDKSSGTANGNKNT. The span at 228-240 shows a compositional bias: polar residues; that stretch reads DKSSGTANGNKNT. One can recognise a 3'-5' exonuclease domain in the interval 312-490; the sequence is ELICFSIYCG…LYESMTKKLQ (179 aa). Residues 673–694 are disordered; the sequence is VVEDDDVETSETQKSKTDDETD. Residues 717 to 1048 are polymerase; the sequence is AIASLCEVCS…DAKCAQNWYA (332 aa).

It belongs to the DNA polymerase type-A family. In terms of tissue distribution, expressed in shoot apical meristem.

It localises to the plastid. It is found in the chloroplast. The protein resides in the mitochondrion. The enzyme catalyses DNA(n) + a 2'-deoxyribonucleoside 5'-triphosphate = DNA(n+1) + diphosphate. With respect to regulation, not inhibited by aphidicolin. Functionally, in addition to polymerase activity, this DNA polymerase exhibits 5'-3' exonuclease activity. Required for DNA replication and accumulation in plastids and mitochondria. May be required for DNA repair in both organelles. This chain is DNA polymerase I A, chloroplastic/mitochondrial (POLIA), found in Arabidopsis thaliana (Mouse-ear cress).